A 101-amino-acid polypeptide reads, in one-letter code: Large ribosomal subunit protein uL24 (101 aa).

Belongs to the universal ribosomal protein uL24 family. As to quaternary structure, part of the 50S ribosomal subunit.

Functionally, one of two assembly initiator proteins, it binds directly to the 5'-end of the 23S rRNA, where it nucleates assembly of the 50S subunit. One of the proteins that surrounds the polypeptide exit tunnel on the outside of the subunit. This is Large ribosomal subunit protein uL24 from Streptococcus thermophilus (strain ATCC BAA-491 / LMD-9).